Reading from the N-terminus, the 259-residue chain is MTGFGSPCGACKFLRRKCVRGCVFAPYFCHEQGAAHFAAIHKVFGASNVSKLLAHLPLADRPEAAVTISYEAQARLRDPIYGCVAHIFALQQQVMTLQAQLASLKAAAAQGIHHQDVGATTKGGYMSAAATAADDQLGYGGYNQWCGSNGGGAPAASQPGAYSSNGGAGHGHDSITALLAAGSDYMQHSLYHAFEHSEGAGAVDDGHAAAAAFEAAAESSSCGMAASFAADESVWRSSSSGYQDCEDLQSVAYAYLNRS.

In terms of domain architecture, LOB spans 6 to 108 (SPCGACKFLR…AQLASLKAAA (103 aa)).

This sequence belongs to the LOB domain-containing protein family. As to quaternary structure, can form homodimers. Expressed in unelongating basal internodes, at the base of shoot in parenchyma cells adjacent to the peripheral vascular cylinder of the stem, and root pericycle cells. Expressed in lateral and adventitious root primordia, tiller primordia, vascular tissues, scutellum, and young pedicels.

Its subcellular location is the nucleus. Acts as a positive regulator of adventitious (crown) root formation by promoting its initiation. Acts as a positive regulator of lateral root formation. Regulated by the auxin response factor and transcriptional activator ARF23/ARF1. Involved in auxin-mediated cell dedifferentiation, and may promote the initial cell division in the pericycle cells adjacent to the peripheral vascular cylinder at the base of the stem. May act upstream of the gene regulatory network controlling adventitious root (crown) development. This chain is LOB domain-containing protein CRL1, found in Oryza sativa subsp. japonica (Rice).